The primary structure comprises 232 residues: Phosphatidylserine decarboxylase proenzyme (232 aa).

S190 functions as the Schiff-base intermediate with substrate; via pyruvic acid in the catalytic mechanism. S190 carries the pyruvic acid (Ser); by autocatalysis modification.

It belongs to the phosphatidylserine decarboxylase family. PSD-A subfamily. In terms of assembly, heterodimer of a large membrane-associated beta subunit and a small pyruvoyl-containing alpha subunit. The cofactor is pyruvate. Post-translationally, is synthesized initially as an inactive proenzyme. Formation of the active enzyme involves a self-maturation process in which the active site pyruvoyl group is generated from an internal serine residue via an autocatalytic post-translational modification. Two non-identical subunits are generated from the proenzyme in this reaction, and the pyruvate is formed at the N-terminus of the alpha chain, which is derived from the carboxyl end of the proenzyme. The post-translation cleavage follows an unusual pathway, termed non-hydrolytic serinolysis, in which the side chain hydroxyl group of the serine supplies its oxygen atom to form the C-terminus of the beta chain, while the remainder of the serine residue undergoes an oxidative deamination to produce ammonia and the pyruvoyl prosthetic group on the alpha chain.

The protein resides in the cell membrane. It catalyses the reaction a 1,2-diacyl-sn-glycero-3-phospho-L-serine + H(+) = a 1,2-diacyl-sn-glycero-3-phosphoethanolamine + CO2. It functions in the pathway phospholipid metabolism; phosphatidylethanolamine biosynthesis; phosphatidylethanolamine from CDP-diacylglycerol: step 2/2. Its function is as follows. Catalyzes the formation of phosphatidylethanolamine (PtdEtn) from phosphatidylserine (PtdSer). This chain is Phosphatidylserine decarboxylase proenzyme, found in Rhodopseudomonas palustris (strain ATCC BAA-98 / CGA009).